Consider the following 621-residue polypeptide: UvrABC system protein C (621 aa).

Residues 21–100 form the GIY-YIG domain; it reads AEPGVYLMRD…IKTYQPPYNV (80 aa). The 36-residue stretch at 210 to 245 folds into the UVR domain; sequence DELIRELKEKMAQAAQQENYEAAARYRDQIRGLEQL.

Belongs to the UvrC family. Interacts with UvrB in an incision complex.

It localises to the cytoplasm. The UvrABC repair system catalyzes the recognition and processing of DNA lesions. UvrC both incises the 5' and 3' sides of the lesion. The N-terminal half is responsible for the 3' incision and the C-terminal half is responsible for the 5' incision. The protein is UvrABC system protein C of Synechococcus sp. (strain JA-3-3Ab) (Cyanobacteria bacterium Yellowstone A-Prime).